The following is a 558-amino-acid chain: Arginine--tRNA ligase (558 aa).

Residues 119-129 carry the 'HIGH' region motif; that stretch reads ANPNGPLHVGH.

This sequence belongs to the class-I aminoacyl-tRNA synthetase family.

It is found in the cytoplasm. It carries out the reaction tRNA(Arg) + L-arginine + ATP = L-arginyl-tRNA(Arg) + AMP + diphosphate. The sequence is that of Arginine--tRNA ligase from Methanoregula boonei (strain DSM 21154 / JCM 14090 / 6A8).